A 412-amino-acid polypeptide reads, in one-letter code: Thyroxine-binding globulin (412 aa).

A signal peptide spans 1-16 (MPLFFSLVLLILGLHC). 4 N-linked (GlcNAc...) asparagine glycosylation sites follow: Asn-35, Asn-98, Asn-164, and Asn-252. Residues Asn-292 and Lys-395 each contribute to the thyroxine site.

The protein belongs to the serpin family. Expressed by the liver and secreted in plasma.

The protein localises to the secreted. Its function is as follows. Major thyroid hormone transport protein in serum. This Ovis aries (Sheep) protein is Thyroxine-binding globulin (SERPINA7).